The sequence spans 256 residues: Hydroxyacylglutathione hydrolase (256 aa).

Zn(2+) is bound by residues H55, H57, D59, H60, H113, D132, and H170.

The protein belongs to the metallo-beta-lactamase superfamily. Glyoxalase II family. In terms of assembly, monomer. The cofactor is Zn(2+).

The catalysed reaction is an S-(2-hydroxyacyl)glutathione + H2O = a 2-hydroxy carboxylate + glutathione + H(+). It functions in the pathway secondary metabolite metabolism; methylglyoxal degradation; (R)-lactate from methylglyoxal: step 2/2. In terms of biological role, thiolesterase that catalyzes the hydrolysis of S-D-lactoyl-glutathione to form glutathione and D-lactic acid. This chain is Hydroxyacylglutathione hydrolase, found in Methylococcus capsulatus (strain ATCC 33009 / NCIMB 11132 / Bath).